We begin with the raw amino-acid sequence, 141 residues long: uncharacterized protein (141 aa).

Residues 1-39 are compositionally biased toward low complexity; sequence MNNNNNNNNNNNNNNNNNNNNNNNNNSYDSNHSSSSYTS. The disordered stretch occupies residues 1-48; the sequence is MNNNNNNNNNNNNNNNNNNNNNNNNNSYDSNHSSSSYTSENQNREQQF. A helical membrane pass occupies residues 109–129; sequence FFCKIILVFICLVAIYSLVVI.

It localises to the membrane. This is an uncharacterized protein from Dictyostelium discoideum (Social amoeba).